The chain runs to 411 residues: UPF0597 protein Fnod_1278 (411 aa).

Belongs to the UPF0597 family.

The polypeptide is UPF0597 protein Fnod_1278 (Fervidobacterium nodosum (strain ATCC 35602 / DSM 5306 / Rt17-B1)).